The following is a 314-amino-acid chain: Probable manganese-dependent inorganic pyrophosphatase (314 aa).

The Mn(2+) site is built by His10, Asp14, Asp16, Asp80, His102, and Asp154.

It belongs to the PPase class C family. The cofactor is Mn(2+).

It is found in the cytoplasm. The enzyme catalyses diphosphate + H2O = 2 phosphate + H(+). This chain is Probable manganese-dependent inorganic pyrophosphatase (ppaC), found in Lactococcus lactis subsp. lactis (strain IL1403) (Streptococcus lactis).